We begin with the raw amino-acid sequence, 200 residues long: Inner membrane-spanning protein YciB (200 aa).

Transmembrane regions (helical) follow at residues 32–52 (FVAT…SYVV), 56–76 (VPLM…LTLV), 93–113 (LFAV…AILF), 126–146 (FLTI…EVIW), and 153–173 (FWVA…AMTQ).

The protein belongs to the YciB family.

It localises to the cell inner membrane. In terms of biological role, plays a role in cell envelope biogenesis, maintenance of cell envelope integrity and membrane homeostasis. The chain is Inner membrane-spanning protein YciB from Afipia carboxidovorans (strain ATCC 49405 / DSM 1227 / KCTC 32145 / OM5) (Oligotropha carboxidovorans).